We begin with the raw amino-acid sequence, 520 residues long: 5'-nucleotidase domain-containing protein 2 (520 aa).

Asp73 acts as the Nucleophile in catalysis. Asp73, Asp75, and Asp358 together coordinate Mg(2+). Residue Asp75 is the Proton donor of the active site.

Belongs to the 5'(3')-deoxyribonucleotidase family. In terms of assembly, interacts with tyrosine 3-monooxygenase TH; the interaction results in reduced phosphorylation and decreased catalytic activity of TH.

It is found in the cytoplasm. In terms of biological role, promotes dephosphorylation of tyrosine 3-monooxygenase TH which decreases TH catalytic activity and leads to reduced synthesis of catecholamines including dopamine, noradrenaline and adrenaline. The exact mechanism of activity is unknown but may act as a phosphatase or promote the activity of phosphatases or may inhibit phosphorylation by acting as a barrier to interfere with protein kinase access. The protein is 5'-nucleotidase domain-containing protein 2 (NT5DC2) of Homo sapiens (Human).